A 283-amino-acid polypeptide reads, in one-letter code: 4-diphosphocytidyl-2-C-methyl-D-erythritol kinase (283 aa).

K10 is a catalytic residue. 99 to 109 (PMGGGLGGGSS) is an ATP binding site. Residue D141 is part of the active site.

This sequence belongs to the GHMP kinase family. IspE subfamily. As to quaternary structure, homodimer.

It carries out the reaction 4-CDP-2-C-methyl-D-erythritol + ATP = 4-CDP-2-C-methyl-D-erythritol 2-phosphate + ADP + H(+). The protein operates within isoprenoid biosynthesis; isopentenyl diphosphate biosynthesis via DXP pathway; isopentenyl diphosphate from 1-deoxy-D-xylulose 5-phosphate: step 3/6. In terms of biological role, catalyzes the phosphorylation of the position 2 hydroxy group of 4-diphosphocytidyl-2C-methyl-D-erythritol. The protein is 4-diphosphocytidyl-2-C-methyl-D-erythritol kinase of Escherichia coli (strain 55989 / EAEC).